The following is a 98-amino-acid chain: Peptides MS9.1 (98 aa).

The first 21 residues, 1-21, serve as a signal peptide directing secretion; the sequence is MKQSLILAVLCLALVFATIEA. A propeptide spanning residues 22–27 is cleaved from the precursor; the sequence is KPKADP. Cystine bridges form between cysteine 34–cysteine 46 and cysteine 37–cysteine 52. 2 propeptides span residues 63–64 and 92–98; these read DP and DPVRDAE.

It belongs to the sea anemone BBH family.

It localises to the secreted. The protein localises to the nematocyst. In terms of biological role, acts as a positive modulator of mammalian TRPA1, a non-selective cation channel involved in detection of pain, in vitro yet has an analgesic and anti-inflammatory effect in vivo. The polypeptide is Peptides MS9.1 (Metridium senile (Brown sea anemone)).